The sequence spans 161 residues: 18.1 kDa class I heat shock protein (161 aa).

In terms of domain architecture, sHSP spans 47 to 161; sequence ETAAFAGARI…PDVKSIQVTG (115 aa).

The protein belongs to the small heat shock protein (HSP20) family. May form oligomeric structures.

Its subcellular location is the cytoplasm. The protein is 18.1 kDa class I heat shock protein (HSP18.1) of Oryza sativa subsp. japonica (Rice).